We begin with the raw amino-acid sequence, 1405 residues long: DNA-directed RNA polymerase subunit beta' (1405 aa).

Positions 71, 73, 86, and 89 each coordinate Zn(2+). Residues D462, D464, and D466 each contribute to the Mg(2+) site. Residues C820, C893, C900, and C903 each contribute to the Zn(2+) site.

This sequence belongs to the RNA polymerase beta' chain family. As to quaternary structure, the RNAP catalytic core consists of 2 alpha, 1 beta, 1 beta' and 1 omega subunit. When a sigma factor is associated with the core the holoenzyme is formed, which can initiate transcription. Mg(2+) is required as a cofactor. Requires Zn(2+) as cofactor.

The catalysed reaction is RNA(n) + a ribonucleoside 5'-triphosphate = RNA(n+1) + diphosphate. Its function is as follows. DNA-dependent RNA polymerase catalyzes the transcription of DNA into RNA using the four ribonucleoside triphosphates as substrates. This Methylorubrum extorquens (strain CM4 / NCIMB 13688) (Methylobacterium extorquens) protein is DNA-directed RNA polymerase subunit beta'.